We begin with the raw amino-acid sequence, 297 residues long: N-acetylmuramic acid 6-phosphate etherase (297 aa).

The SIS domain occupies A55–K218. E83 functions as the Proton donor in the catalytic mechanism. E114 is an active-site residue.

It belongs to the GCKR-like family. MurNAc-6-P etherase subfamily. Homodimer.

It carries out the reaction N-acetyl-D-muramate 6-phosphate + H2O = N-acetyl-D-glucosamine 6-phosphate + (R)-lactate. It participates in amino-sugar metabolism; 1,6-anhydro-N-acetylmuramate degradation. The protein operates within amino-sugar metabolism; N-acetylmuramate degradation. It functions in the pathway cell wall biogenesis; peptidoglycan recycling. Functionally, specifically catalyzes the cleavage of the D-lactyl ether substituent of MurNAc 6-phosphate, producing GlcNAc 6-phosphate and D-lactate. Together with AnmK, is also required for the utilization of anhydro-N-acetylmuramic acid (anhMurNAc) either imported from the medium or derived from its own cell wall murein, and thus plays a role in cell wall recycling. The sequence is that of N-acetylmuramic acid 6-phosphate etherase from Serratia proteamaculans (strain 568).